The sequence spans 102 residues: Large ribosomal subunit protein mL63 (102 aa).

This sequence belongs to the mitochondrion-specific ribosomal protein mL63 family.

It localises to the mitochondrion. In Bos taurus (Bovine), this protein is Large ribosomal subunit protein mL63 (MRPL57).